Consider the following 254-residue polypeptide: Leucyl/phenylalanyl-tRNA--protein transferase (254 aa).

The segment covering 1–10 has biased composition (pro residues); it reads MSSQPPPLPW. The disordered stretch occupies residues 1-28; it reads MSSQPPPLPWLDPNQDFPPTSQAWDENS.

This sequence belongs to the L/F-transferase family.

It is found in the cytoplasm. It catalyses the reaction N-terminal L-lysyl-[protein] + L-leucyl-tRNA(Leu) = N-terminal L-leucyl-L-lysyl-[protein] + tRNA(Leu) + H(+). The catalysed reaction is N-terminal L-arginyl-[protein] + L-leucyl-tRNA(Leu) = N-terminal L-leucyl-L-arginyl-[protein] + tRNA(Leu) + H(+). The enzyme catalyses L-phenylalanyl-tRNA(Phe) + an N-terminal L-alpha-aminoacyl-[protein] = an N-terminal L-phenylalanyl-L-alpha-aminoacyl-[protein] + tRNA(Phe). Its function is as follows. Functions in the N-end rule pathway of protein degradation where it conjugates Leu, Phe and, less efficiently, Met from aminoacyl-tRNAs to the N-termini of proteins containing an N-terminal arginine or lysine. The protein is Leucyl/phenylalanyl-tRNA--protein transferase of Albidiferax ferrireducens (strain ATCC BAA-621 / DSM 15236 / T118) (Rhodoferax ferrireducens).